Reading from the N-terminus, the 1281-residue chain is Tubulin polyglutamylase TTLL5 (1281 aa).

The TTL domain maps to 62–407 (RYHLSYKIVR…VCQDPAQRAS (346 aa)). ATP-binding positions include Lys180, 186 to 187 (RG), 208 to 211 (SRYI), and 221 to 223 (KFD). Residue Arg186 participates in a protein binding. An L-glutamate-binding site is contributed by Arg247. 268 to 269 (TN) provides a ligand contact to ATP. L-glutamate is bound by residues Tyr270, Ser271, and Lys293. Residues Asp353, Glu366, and Asn368 each contribute to the Mg(2+) site. The c-MTBD region stretch occupies residues 378–488 (PLDLKIKASM…RGGFIRIFPT (111 aa)). Position 384 (Lys384) interacts with L-glutamate. 3 disordered regions span residues 577 to 614 (MNVK…LREN), 1072 to 1114 (SASA…LQTG), and 1199 to 1281 (SSAT…HTKI). Residues 584 to 604 (ESEEEEEVALDNEDEEQEASQ) are compositionally biased toward acidic residues. Composition is skewed to polar residues over residues 1086 to 1113 (SGPT…SLQT), 1199 to 1212 (SSAT…TTLP), 1240 to 1263 (ATSQ…SSLN), and 1270 to 1281 (ITSSTDPAHTKI).

The protein belongs to the tubulin--tyrosine ligase family. In terms of assembly, interacts with the transcriptional coactivators NCOA1/SRC-1 and NCOA2/TIF2. It depends on Mg(2+) as a cofactor. Expressed in the retina, found in the rod and cone photoreceptors (at protein level). Widely expressed with highest levels in heart and skeletal muscle and low levels in other tissues.

The protein resides in the cell projection. It localises to the cilium. It is found in the cytoplasm. The protein localises to the cytoskeleton. Its subcellular location is the cilium basal body. The protein resides in the nucleus. The catalysed reaction is L-glutamyl-[protein] + L-glutamate + ATP = gamma-L-glutamyl-L-glutamyl-[protein] + ADP + phosphate + H(+). It carries out the reaction (L-glutamyl)(n)-gamma-L-glutamyl-L-glutamyl-[protein] + L-glutamate + ATP = (L-glutamyl)(n+1)-gamma-L-glutamyl-L-glutamyl-[protein] + ADP + phosphate + H(+). Its function is as follows. Polyglutamylase which modifies tubulin, generating polyglutamate side chains on the gamma-carboxyl group of specific glutamate residues within the C-terminal tail of tubulin. Preferentially mediates ATP-dependent initiation step of the polyglutamylation reaction over the elongation step. Preferentially modifies the alpha-tubulin tail over a beta-tail. Required for CCSAP localization to both polyglutamylated spindle and cilia microtubules. Increases the effects of transcriptional coactivator NCOA2/TIF2 in glucocorticoid receptor-mediated repression and induction and in androgen receptor-mediated induction. This Homo sapiens (Human) protein is Tubulin polyglutamylase TTLL5.